The chain runs to 280 residues: Transcription factor MYB46 (280 aa).

2 consecutive HTH myb-type domains span residues Val15–Leu67 and Arg68–Leu122. DNA-binding regions (H-T-H motif) lie at residues Trp43–Leu67 and Trp95–Ile118. Residues Ser129–Ala150 form a disordered region.

In terms of tissue distribution, expressed at low levels in stems and siliques, specifically in xylem.

It localises to the nucleus. Functionally, transcription activator. Involved in the regulation of secondary wall biosynthesis in fibers and vessels. Transcription activator of the mannan synthase CSLA9 that recognizes and binds to the DNA consensus sequence 5'-[AG][GT]T[AT]GGT[GA]-3' cis-regulatory element of CSLA9 promoter. Transcription factor that acts as a molecular switch in the NAC012/SND1-mediated transcriptional network regulating secondary wall biosynthesis. Is directly activated by NAC012/SND1. Functions redundantly with MYB83 in the transcriptional regulatory cascade leading to secondary wall formation in fibers and vessels. Transcription activator that binds to the DNA consensus sequence 5'-ACC[AT]A[AC][TC]-3', designated as the secondary wall MYB-responsive element (SMRE). Regulates directly numerous transcription factors and a number of genes involved in secondary wall biosynthesis that contain SMRE elements in their promoters. Is an obligate component of the transcriptional regulatory complex toward the commitment of secondary wall cellulose synthesis. Is required for functional expression of the three secondary wall CESA genes, CESA4, CESA7 and CESA8. In Arabidopsis thaliana (Mouse-ear cress), this protein is Transcription factor MYB46.